Consider the following 76-residue polypeptide: Esculentin-2CG1 (76 aa).

Residues 1–22 form the signal peptide; it reads MFTMKKSMLLLFFLGTISLSLC. A propeptide spans 23–37 (removed in mature form); sequence EEERSADEDDGEEEV. Cys-70 and Cys-76 are joined by a disulfide.

Expressed by the skin glands.

Its subcellular location is the secreted. In terms of biological role, antimicrobial peptide active against a variety of Gram-positive and some Gram-negative bacterial strains. Has antifungal activity against a slime mold isolate. Has hemolytic activity against human erythrocytes. The protein is Esculentin-2CG1 of Amolops chunganensis (Chungan torrent frog).